The primary structure comprises 270 residues: Glutamate racemase (270 aa).

Residues 14–15 (DS) and 46–47 (YG) each bind substrate. The Proton donor/acceptor role is filled by cysteine 77. Substrate is bound at residue 78–79 (NT). The active-site Proton donor/acceptor is the cysteine 186. 187 to 188 (TH) is a binding site for substrate.

It belongs to the aspartate/glutamate racemases family.

It carries out the reaction L-glutamate = D-glutamate. It participates in cell wall biogenesis; peptidoglycan biosynthesis. Its function is as follows. Provides the (R)-glutamate required for cell wall biosynthesis. In Trichodesmium erythraeum (strain IMS101), this protein is Glutamate racemase.